Reading from the N-terminus, the 326-residue chain is Vitamin B12 import system permease protein BtuC (326 aa).

9 consecutive transmembrane segments (helical) span residues 17-39 (LSLSLLVLLATLLSLCAGEQWIA), 59-81 (RTLAVLLVGAALALSGAVMQALF), 88-107 (PGLLGVSNGAGVGLIAAVLL), 111-133 (QLAGWALGLCAIAGALIITLILL), 146-168 (LLAGVALGIICSALMTWAIYFST), 188-205 (WQQSWLMIALIPVLIWIC), 242-264 (MVGVSVAMAGAIGFIGLVIPHIL), 274-296 (VLLPGCALAGAIALLLADVVARL), and 303-322 (LPIGVVTATLGAPVFIWLLL).

The protein belongs to the binding-protein-dependent transport system permease family. FecCD subfamily. In terms of assembly, the complex is composed of two ATP-binding proteins (BtuD), two transmembrane proteins (BtuC) and a solute-binding protein (BtuF).

The protein localises to the cell inner membrane. Its function is as follows. Part of the ABC transporter complex BtuCDF involved in vitamin B12 import. Involved in the translocation of the substrate across the membrane. The chain is Vitamin B12 import system permease protein BtuC from Salmonella paratyphi A (strain ATCC 9150 / SARB42).